The chain runs to 236 residues: Ribose-5-phosphate isomerase A (236 aa).

Residues 31–34 (TGST), 84–87 (DGAD), and 97–100 (KGGG) each bind substrate. The active-site Proton acceptor is glutamate 106. Lysine 124 lines the substrate pocket.

Belongs to the ribose 5-phosphate isomerase family. As to quaternary structure, homodimer.

It carries out the reaction aldehydo-D-ribose 5-phosphate = D-ribulose 5-phosphate. Its pathway is carbohydrate degradation; pentose phosphate pathway; D-ribose 5-phosphate from D-ribulose 5-phosphate (non-oxidative stage): step 1/1. Functionally, catalyzes the reversible conversion of ribose-5-phosphate to ribulose 5-phosphate. The protein is Ribose-5-phosphate isomerase A of Polynucleobacter asymbioticus (strain DSM 18221 / CIP 109841 / QLW-P1DMWA-1) (Polynucleobacter necessarius subsp. asymbioticus).